An 827-amino-acid polypeptide reads, in one-letter code: Lon protease 2 (827 aa).

Positions 1-22 (MSDEKKKGSAASAMPTAMAPPG) are disordered. The segment covering 9–21 (SAASAMPTAMAPP) has biased composition (low complexity). A Lon N-terminal domain is found at 33–227 (LPILPLRNSV…LVLELLNRKR (195 aa)). 379 to 386 (GPPGVGKT) lines the ATP pocket. Positions 615–796 (TEVPGVATGL…DDVLKAALET (182 aa)) constitute a Lon proteolytic domain. Catalysis depends on residues Ser702 and Lys745. Residues 799–827 (VGVAGTPGGEPGKEAPLPKPAESAPEVRA) form a disordered region.

This sequence belongs to the peptidase S16 family. Homohexamer. Organized in a ring with a central cavity.

Its subcellular location is the cytoplasm. The enzyme catalyses Hydrolysis of proteins in presence of ATP.. In terms of biological role, ATP-dependent serine protease that mediates the selective degradation of mutant and abnormal proteins as well as certain short-lived regulatory proteins. Required for cellular homeostasis and for survival from DNA damage and developmental changes induced by stress. Degrades polypeptides processively to yield small peptide fragments that are 5 to 10 amino acids long. Binds to DNA in a double-stranded, site-specific manner. The chain is Lon protease 2 from Myxococcus xanthus.